A 264-amino-acid polypeptide reads, in one-letter code: Indole-3-glycerol phosphate synthase (264 aa).

Belongs to the TrpC family.

The catalysed reaction is 1-(2-carboxyphenylamino)-1-deoxy-D-ribulose 5-phosphate + H(+) = (1S,2R)-1-C-(indol-3-yl)glycerol 3-phosphate + CO2 + H2O. It participates in amino-acid biosynthesis; L-tryptophan biosynthesis; L-tryptophan from chorismate: step 4/5. The sequence is that of Indole-3-glycerol phosphate synthase from Xylella fastidiosa (strain M12).